A 152-amino-acid polypeptide reads, in one-letter code: Pertussis toxin subunit 4 (152 aa).

The first 42 residues, 1-42, serve as a signal peptide directing secretion; sequence MLRRFPTRTTAPGQGGARRSRVRALAWLLASGAMTHLSPALA. Intrachain disulfides connect Cys73/Cys93 and Cys145/Cys151.

Pertussis toxin contains five different chains, S1-S5. They are organized into 2 functional subunits: A, composed of S1 (which is toxic) and B, containing S2, S3, S5, and two copies of S4 (B binds to the membrane receptors). Dimers of S2-S4 and S3-S4 are held together by S5.

It is found in the secreted. The protein localises to the host cell membrane. In terms of biological role, PTX oligomer B binds to receptors on the eukaryotic cell surface and facilitates the translocation of the toxic subunit across the cell membrane. This Bordetella parapertussis (strain 12822 / ATCC BAA-587 / NCTC 13253) protein is Pertussis toxin subunit 4 (ptxD).